The following is a 596-amino-acid chain: NADH-quinone oxidoreductase subunit C/D (596 aa).

Residues 1-186 (MTDLTAQDAA…DPFELTKAKQ (186 aa)) form an NADH dehydrogenase I subunit C region. Residues 210–596 (DFMFLNLGPN…IDFVMSDVDR (387 aa)) form an NADH dehydrogenase I subunit D region.

This sequence in the N-terminal section; belongs to the complex I 30 kDa subunit family. The protein in the C-terminal section; belongs to the complex I 49 kDa subunit family. NDH-1 is composed of 13 different subunits. Subunits NuoB, CD, E, F, and G constitute the peripheral sector of the complex.

The protein resides in the cell inner membrane. The enzyme catalyses a quinone + NADH + 5 H(+)(in) = a quinol + NAD(+) + 4 H(+)(out). NDH-1 shuttles electrons from NADH, via FMN and iron-sulfur (Fe-S) centers, to quinones in the respiratory chain. The immediate electron acceptor for the enzyme in this species is believed to be ubiquinone. Couples the redox reaction to proton translocation (for every two electrons transferred, four hydrogen ions are translocated across the cytoplasmic membrane), and thus conserves the redox energy in a proton gradient. This Salmonella dublin (strain CT_02021853) protein is NADH-quinone oxidoreductase subunit C/D.